Reading from the N-terminus, the 391-residue chain is Chaperone protein DnaJ (391 aa).

The 66-residue stretch at 6–71 (CYYEVLKVER…NKRARYDQYG (66 aa)) folds into the J domain. The CR-type zinc finger occupies 137–215 (GCHKDIVFRR…CRGTGTQNEK (79 aa)). Residues Cys150, Cys153, Cys167, Cys170, Cys189, Cys192, Cys203, and Cys206 each coordinate Zn(2+). CXXCXGXG motif repeat units lie at residues 150–157 (CDTCDGSG), 167–174 (CTMCGGQG), 189–196 (CPTCKGAG), and 203–210 (CGKCRGTG). The tract at residues 372–391 (FFDPEPEEAGTGSTDTEKDS) is disordered.

It belongs to the DnaJ family. Homodimer. The cofactor is Zn(2+).

It is found in the cytoplasm. Participates actively in the response to hyperosmotic and heat shock by preventing the aggregation of stress-denatured proteins and by disaggregating proteins, also in an autonomous, DnaK-independent fashion. Unfolded proteins bind initially to DnaJ; upon interaction with the DnaJ-bound protein, DnaK hydrolyzes its bound ATP, resulting in the formation of a stable complex. GrpE releases ADP from DnaK; ATP binding to DnaK triggers the release of the substrate protein, thus completing the reaction cycle. Several rounds of ATP-dependent interactions between DnaJ, DnaK and GrpE are required for fully efficient folding. Also involved, together with DnaK and GrpE, in the DNA replication of plasmids through activation of initiation proteins. In Rhodopirellula baltica (strain DSM 10527 / NCIMB 13988 / SH1), this protein is Chaperone protein DnaJ.